A 258-amino-acid chain; its full sequence is Acyl-[acyl-carrier-protein]--UDP-N-acetylglucosamine O-acyltransferase (258 aa).

The protein belongs to the transferase hexapeptide repeat family. LpxA subfamily. In terms of assembly, homotrimer.

It is found in the cytoplasm. It carries out the reaction a (3R)-hydroxyacyl-[ACP] + UDP-N-acetyl-alpha-D-glucosamine = a UDP-3-O-[(3R)-3-hydroxyacyl]-N-acetyl-alpha-D-glucosamine + holo-[ACP]. Its pathway is glycolipid biosynthesis; lipid IV(A) biosynthesis; lipid IV(A) from (3R)-3-hydroxytetradecanoyl-[acyl-carrier-protein] and UDP-N-acetyl-alpha-D-glucosamine: step 1/6. Its function is as follows. Involved in the biosynthesis of lipid A, a phosphorylated glycolipid that anchors the lipopolysaccharide to the outer membrane of the cell. The sequence is that of Acyl-[acyl-carrier-protein]--UDP-N-acetylglucosamine O-acyltransferase from Pseudomonas fluorescens (strain ATCC BAA-477 / NRRL B-23932 / Pf-5).